A 98-amino-acid chain; its full sequence is NADH-ubiquinone oxidoreductase chain 4L (98 aa).

The next 3 membrane-spanning stretches (helical) occupy residues 1–21 (MPFI…GLLI), 29–49 (SLLC…LMTL), and 61–81 (IVLL…LVLI).

It belongs to the complex I subunit 4L family. As to quaternary structure, core subunit of respiratory chain NADH dehydrogenase (Complex I) which is composed of 45 different subunits.

The protein resides in the mitochondrion inner membrane. It catalyses the reaction a ubiquinone + NADH + 5 H(+)(in) = a ubiquinol + NAD(+) + 4 H(+)(out). Its function is as follows. Core subunit of the mitochondrial membrane respiratory chain NADH dehydrogenase (Complex I) which catalyzes electron transfer from NADH through the respiratory chain, using ubiquinone as an electron acceptor. Part of the enzyme membrane arm which is embedded in the lipid bilayer and involved in proton translocation. The protein is NADH-ubiquinone oxidoreductase chain 4L (MT-ND4L) of Aotus trivirgatus (Three-striped night monkey).